The primary structure comprises 245 residues: Putative transport permease YvfS (245 aa).

A run of 6 helical transmembrane segments spans residues 20–40 (YFVLWSLIMPIAFYYFFTNVV), 53–73 (HYLMSMTVFSVMGSSIMTLGI), 103–123 (IGQSVIHVLSITVIFLFGAII), 137–157 (GLWILFGALPFLALGTLIGLM), 164–184 (AGISNVLYMLLALGGGMWMPF), and 214–234 (GSPTWKNILILIAYMMLFMLL). The region spanning 20 to 242 (YFVLWSLIMP…LLSKYIRRKQ (223 aa)) is the ABC transmembrane type-2 domain.

It belongs to the ABC-2 integral membrane protein family.

The protein localises to the cell membrane. This is Putative transport permease YvfS (yvfS) from Bacillus subtilis (strain 168).